Here is a 146-residue protein sequence, read N- to C-terminus: UPF0178 protein Lin1493 (146 aa).

Belongs to the UPF0178 family.

This is UPF0178 protein Lin1493 from Listeria innocua serovar 6a (strain ATCC BAA-680 / CLIP 11262).